We begin with the raw amino-acid sequence, 644 residues long: MPDIQLPDGSHRQFAEPVTGLTLARAIGSGLARAAVAMRVDGILKDLSAVLDQDAEVAIVTRDSADGLEVIRHSTAHLLAQAVQSLYPEAQVTIGPVIDNGFYYDFAFPRGFTPEDLEAIEARMHALVKENLPVQREMLSREDAIALFEKMGEDYKVEIIRAIPRGEPLSLYRQGDFVDLCRGPHVPSTGVLGAFKLQRVAGAYWRGDSRNPMLQRIYGTAWAQQKDLDAYLQQLAEAEKRDHRRIGTELELFSIQEDAGGGLVFWHPMGSRVRRVIEDFWKEAHVEAGYDLLYTPHIAHEQLWYTSGHKDFYSESMFDPMQDEGQAYQLKPMNCPFHILIYKDKLHSYRDLPIRWAELGTVYRHEMSGALHGLMRVRGFTQDDAHVFCRPDQIEAEIGAVLVLVRKILGTFGFDQYEINLSTRPGHSVGSDEIWDAATQALRNALERAGLEYQVDAGGGAFYGPKIDLKIQDAIGRKWQCSTVQLDFNLPERFAMEYVAEDGARKVPIMVHRAIFGSIERFFGVLIEHYEGKFPVWLAPVQAVVLPISEHYSEYAESVSDVLVKRGIRAETDLRNEKIGYKIRAHTLRRVPYLLVVGEREKEAGTVAVRDRNGQDLGTLSIDAVGATLQKMDQARVNTLEWQG.

The region spanning 1–61 (MPDIQLPDGS…DQDAEVAIVT (61 aa)) is the TGS domain. Residues 242–535 (DHRRIGTELE…LIEHYEGKFP (294 aa)) are catalytic. The Zn(2+) site is built by cysteine 335, histidine 386, and histidine 512.

Belongs to the class-II aminoacyl-tRNA synthetase family. Homodimer. Requires Zn(2+) as cofactor.

Its subcellular location is the cytoplasm. The catalysed reaction is tRNA(Thr) + L-threonine + ATP = L-threonyl-tRNA(Thr) + AMP + diphosphate + H(+). Functionally, catalyzes the attachment of threonine to tRNA(Thr) in a two-step reaction: L-threonine is first activated by ATP to form Thr-AMP and then transferred to the acceptor end of tRNA(Thr). Also edits incorrectly charged L-seryl-tRNA(Thr). The polypeptide is Threonine--tRNA ligase (Acidithiobacillus ferrooxidans (strain ATCC 23270 / DSM 14882 / CIP 104768 / NCIMB 8455) (Ferrobacillus ferrooxidans (strain ATCC 23270))).